The following is a 1067-amino-acid chain: TBC1 domain family member 31 (1067 aa).

WD repeat units lie at residues 36–75, 76–119, 120–161, 162–201, 202–249, and 250–288; these read GKVV…FRLV, LKTG…SWMR, GHEG…KLNI, RQSV…CKYQ, LPLP…RVIQ, and MPSQ…RFIN. Positions 419–594 constitute a Rab-GAP TBC domain; sequence EYPAKYRMFV…RLFDNIFSNH (176 aa). Residues 724 to 773 adopt a coiled-coil conformation; sequence QQELLQKAEEQRKHVLEQEEEKLTQQRAKLAAMKRELKVKELQLLDATRR. Basic and acidic residues-rich tracts occupy residues 896 to 912 and 926 to 937; these read KADA…EELQ and MREEAHRKKDEA. Disordered stretches follow at residues 896–955 and 1045–1067; these read KADA…HSDG and AARA…PVSP. 2 stretches are compositionally biased toward polar residues: residues 941 to 953 and 1052 to 1067; these read IQES…STHS and SSAS…PVSP.

Its subcellular location is the cytoplasm. The protein resides in the cytoskeleton. It is found in the microtubule organizing center. The protein localises to the centrosome. It localises to the centriolar satellite. Its subcellular location is the cilium basal body. Its function is as follows. Molecular adapter which is involved in cilium biogenesis. Part of a functional complex including OFD1 a centriolar protein involved in cilium assembly. Could regulate the cAMP-dependent phosphorylation of OFD1, and its subsequent ubiquitination by PJA2 which ultimately leads to its proteasomal degradation. The protein is TBC1 domain family member 31 of Oryzias latipes (Japanese rice fish).